A 105-amino-acid chain; its full sequence is Urease subunit beta (105 aa).

This sequence belongs to the urease beta subunit family. In terms of assembly, heterotrimer of UreA (gamma), UreB (beta) and UreC (alpha) subunits. Three heterotrimers associate to form the active enzyme.

The protein resides in the cytoplasm. The enzyme catalyses urea + 2 H2O + H(+) = hydrogencarbonate + 2 NH4(+). Its pathway is nitrogen metabolism; urea degradation; CO(2) and NH(3) from urea (urease route): step 1/1. The protein is Urease subunit beta of Pseudomonas putida (strain ATCC 47054 / DSM 6125 / CFBP 8728 / NCIMB 11950 / KT2440).